The sequence spans 100 residues: Urease subunit gamma (100 aa).

Belongs to the urease gamma subunit family. In terms of assembly, heterotrimer of UreA (gamma), UreB (beta) and UreC (alpha) subunits. Three heterotrimers associate to form the active enzyme.

The protein resides in the cytoplasm. It catalyses the reaction urea + 2 H2O + H(+) = hydrogencarbonate + 2 NH4(+). The protein operates within nitrogen metabolism; urea degradation; CO(2) and NH(3) from urea (urease route): step 1/1. The protein is Urease subunit gamma of Proteus hauseri.